A 333-amino-acid chain; its full sequence is Ribosomal protein L11 methyltransferase (333 aa).

T181, G202, D224, and N268 together coordinate S-adenosyl-L-methionine.

This sequence belongs to the methyltransferase superfamily. PrmA family.

Its subcellular location is the cytoplasm. It carries out the reaction L-lysyl-[protein] + 3 S-adenosyl-L-methionine = N(6),N(6),N(6)-trimethyl-L-lysyl-[protein] + 3 S-adenosyl-L-homocysteine + 3 H(+). Its function is as follows. Methylates ribosomal protein L11. The protein is Ribosomal protein L11 methyltransferase of Helicobacter pylori (strain ATCC 700392 / 26695) (Campylobacter pylori).